The sequence spans 801 residues: Quinoprotein glucose dehydrogenase A (801 aa).

Positions 1 to 33 are cleaved as a signal peptide; sequence MNQPTSRSGLTTFTVIIIGLLALFLLIGGIWLA. Helical transmembrane passes span 39-55, 59-79, 94-108, and 119-138; these read IYYIIAGVLLLIVAWQL, ASTALWFYAALMLGTIIWSVW, ILGILGLWLLVPAVT, and VALSSTLAIAIVLMVYSIFN. Catalysis depends on Asp-471, which acts as the Proton acceptor.

Belongs to the bacterial PQQ dehydrogenase family. As to quaternary structure, monomer. Requires pyrroloquinoline quinone as cofactor.

It is found in the cell inner membrane. The enzyme catalyses D-glucose + A = D-glucono-1,5-lactone + AH2. Functionally, catalyzes an exceptionally high rate of oxidation of a wide range of aldose sugars, including D-glucose, galactose, arabinose and xylose, and also the disaccharides lactose, cellobiose and maltose. The chain is Quinoprotein glucose dehydrogenase A (gdhA) from Acinetobacter calcoaceticus.